The chain runs to 427 residues: Serine--tRNA ligase (427 aa).

Position 233–235 (233–235) interacts with L-serine; that stretch reads TAE. An ATP-binding site is contributed by 264-266; the sequence is RSE. Glu-287 lines the L-serine pocket. 351 to 354 provides a ligand contact to ATP; it reads EISS. An L-serine-binding site is contributed by Ser-386.

It belongs to the class-II aminoacyl-tRNA synthetase family. Type-1 seryl-tRNA synthetase subfamily. In terms of assembly, homodimer. The tRNA molecule binds across the dimer.

Its subcellular location is the cytoplasm. It carries out the reaction tRNA(Ser) + L-serine + ATP = L-seryl-tRNA(Ser) + AMP + diphosphate + H(+). The catalysed reaction is tRNA(Sec) + L-serine + ATP = L-seryl-tRNA(Sec) + AMP + diphosphate + H(+). Its pathway is aminoacyl-tRNA biosynthesis; selenocysteinyl-tRNA(Sec) biosynthesis; L-seryl-tRNA(Sec) from L-serine and tRNA(Sec): step 1/1. Functionally, catalyzes the attachment of serine to tRNA(Ser). Is also able to aminoacylate tRNA(Sec) with serine, to form the misacylated tRNA L-seryl-tRNA(Sec), which will be further converted into selenocysteinyl-tRNA(Sec). In Thiobacillus denitrificans (strain ATCC 25259 / T1), this protein is Serine--tRNA ligase.